A 189-amino-acid polypeptide reads, in one-letter code: 6,7-dimethyl-8-ribityllumazine synthase (189 aa).

Residues Trp-31, 65–67 (SFE), and 89–91 (CVI) each bind 5-amino-6-(D-ribitylamino)uracil. 94-95 (ET) is a binding site for (2S)-2-hydroxy-3-oxobutyl phosphate. Residue His-97 is the Proton donor of the active site. Residue Phe-122 participates in 5-amino-6-(D-ribitylamino)uracil binding. Arg-136 is a (2S)-2-hydroxy-3-oxobutyl phosphate binding site.

It belongs to the DMRL synthase family.

The catalysed reaction is (2S)-2-hydroxy-3-oxobutyl phosphate + 5-amino-6-(D-ribitylamino)uracil = 6,7-dimethyl-8-(1-D-ribityl)lumazine + phosphate + 2 H2O + H(+). It functions in the pathway cofactor biosynthesis; riboflavin biosynthesis; riboflavin from 2-hydroxy-3-oxobutyl phosphate and 5-amino-6-(D-ribitylamino)uracil: step 1/2. In terms of biological role, catalyzes the formation of 6,7-dimethyl-8-ribityllumazine by condensation of 5-amino-6-(D-ribitylamino)uracil with 3,4-dihydroxy-2-butanone 4-phosphate. This is the penultimate step in the biosynthesis of riboflavin. In Flavobacterium psychrophilum (strain ATCC 49511 / DSM 21280 / CIP 103535 / JIP02/86), this protein is 6,7-dimethyl-8-ribityllumazine synthase.